We begin with the raw amino-acid sequence, 142 residues long: Thioredoxin-like protein YLS8 (142 aa).

It belongs to the DIM1 family. In terms of tissue distribution, expressed in roots, leaves, stems, cauline leaves and flowers.

The chain is Thioredoxin-like protein YLS8 (YLS8) from Arabidopsis thaliana (Mouse-ear cress).